A 487-amino-acid chain; its full sequence is uncharacterized protein (487 aa).

A helical transmembrane segment spans residues 7 to 28 (HVISIFETLGAYFINIFYNFLY). N-linked (GlcNAc...) asparagine; by host glycosylation is found at Asn73, Asn83, and Asn195. Residues 196–235 (RSLLHQIEELTSEKKSLLADLSTLRKKYEKRQSEYRRLVQ) adopt a coiled-coil conformation. Residues 294–305 (TSQELTSKSPNN) are compositionally biased toward polar residues. The segment at 294 to 324 (TSQELTSKSPNNYPVPHSRTIVSKPSDNYPV) is disordered. Asn462 is a glycosylation site (N-linked (GlcNAc...) asparagine; by host).

This sequence belongs to the asfivirus B475L family.

Its subcellular location is the host membrane. This is an uncharacterized protein from African swine fever virus (isolate Tick/South Africa/Pretoriuskop Pr4/1996) (ASFV).